We begin with the raw amino-acid sequence, 807 residues long: ATP-binding cassette sub-family F member 1 (807 aa).

The disordered stretch occupies residues 1-227 (MPKGPKQQPP…KEKAKKAEQM (227 aa)). S22 is modified (phosphoserine). Over residues 29 to 39 (KKGKKDKKTKK) the composition is skewed to basic residues. Basic and acidic residues predominate over residues 47-65 (VEDRQAGEEEKVLKEKEQQ). Over residues 73–85 (QKKKRDTRKGRRK) the composition is skewed to basic residues. Residue S106 is modified to Phosphoserine. Phosphoserine; by CK2 occurs at positions 110 and 141. Residues 148-161 (EKHPPKPAKPEKNR) are compositionally biased toward basic and acidic residues. At S167 the chain carries Phosphoserine. A compositionally biased stretch (acidic residues) spans 197-207 (LDDEEEQDEEE). Residues 208 to 227 (IKEKEPPKQGKEKAKKAEQM) show a composition bias toward basic and acidic residues. The region spanning 266 to 510 (IKLEKFSISA…MYQQKQKELL (245 aa)) is the ABC transporter 1 domain. An ATP-binding site is contributed by 298–305 (GPNGKGKT). The span at 521-542 (KELKAGGKSTKQAEKQTKEALT) shows a compositional bias: basic and acidic residues. The segment at 521 to 564 (KELKAGGKSTKQAEKQTKEALTRKQQKCRRKNQDEESQEAPELL) is disordered. S557 carries the phosphoserine modification. Positions 587-802 (LGLHGVTFGY…VLEALGEVMV (216 aa)) constitute an ABC transporter 2 domain. 620-627 (GPNGVGKS) is a binding site for ATP.

It belongs to the ABC transporter superfamily. ABCF family. EF3 subfamily. As to quaternary structure, interacts (via N-terminus) with EIF2S1; the interaction is independent of its phosphorylated status. Associates (via both ABC transporter domains) with the ribosomes. In terms of processing, phosphorylated at phosphoserine and phosphothreonine. Phosphorylation on Ser-110 and Ser-141 by CK2; inhibits association of EIF2 with ribosomes.

It is found in the cytoplasm. Its subcellular location is the nucleus. The protein localises to the nucleoplasm. It localises to the nucleus envelope. Required for efficient Cap- and IRES-mediated mRNA translation initiation. Not involved in the ribosome biogenesis. The polypeptide is ATP-binding cassette sub-family F member 1 (ABCF1) (Sus scrofa (Pig)).